Here is a 158-residue protein sequence, read N- to C-terminus: NAD(P)H-quinone oxidoreductase subunit N (158 aa).

It belongs to the complex I NdhN subunit family. NDH-1 can be composed of about 15 different subunits; different subcomplexes with different compositions have been identified which probably have different functions.

Its subcellular location is the cellular thylakoid membrane. The catalysed reaction is a plastoquinone + NADH + (n+1) H(+)(in) = a plastoquinol + NAD(+) + n H(+)(out). The enzyme catalyses a plastoquinone + NADPH + (n+1) H(+)(in) = a plastoquinol + NADP(+) + n H(+)(out). In terms of biological role, NDH-1 shuttles electrons from an unknown electron donor, via FMN and iron-sulfur (Fe-S) centers, to quinones in the respiratory and/or the photosynthetic chain. The immediate electron acceptor for the enzyme in this species is believed to be plastoquinone. Couples the redox reaction to proton translocation, and thus conserves the redox energy in a proton gradient. Cyanobacterial NDH-1 also plays a role in inorganic carbon-concentration. This chain is NAD(P)H-quinone oxidoreductase subunit N, found in Prochlorococcus marinus (strain MIT 9215).